A 573-amino-acid polypeptide reads, in one-letter code: Sulfite reductase [NADPH] hemoprotein beta-component (573 aa).

[4Fe-4S] cluster is bound by residues Cys-438, Cys-444, Cys-483, and Cys-487. Cys-487 contacts siroheme.

Belongs to the nitrite and sulfite reductase 4Fe-4S domain family. Alpha(8)-beta(8). The alpha component is a flavoprotein, the beta component is a hemoprotein. The cofactor is siroheme. It depends on [4Fe-4S] cluster as a cofactor.

It carries out the reaction hydrogen sulfide + 3 NADP(+) + 3 H2O = sulfite + 3 NADPH + 4 H(+). Its pathway is sulfur metabolism; hydrogen sulfide biosynthesis; hydrogen sulfide from sulfite (NADPH route): step 1/1. Component of the sulfite reductase complex that catalyzes the 6-electron reduction of sulfite to sulfide. This is one of several activities required for the biosynthesis of L-cysteine from sulfate. This is Sulfite reductase [NADPH] hemoprotein beta-component from Geobacillus thermodenitrificans (strain NG80-2).